The primary structure comprises 423 residues: Glucose-1-phosphate adenylyltransferase (423 aa).

Alpha-D-glucose 1-phosphate is bound by residues tyrosine 100, glycine 165, glutamate 180–lysine 181, and serine 191.

It belongs to the bacterial/plant glucose-1-phosphate adenylyltransferase family. As to quaternary structure, homotetramer.

The enzyme catalyses alpha-D-glucose 1-phosphate + ATP + H(+) = ADP-alpha-D-glucose + diphosphate. The protein operates within glycan biosynthesis; glycogen biosynthesis. Its function is as follows. Involved in the biosynthesis of ADP-glucose, a building block required for the elongation reactions to produce glycogen. Catalyzes the reaction between ATP and alpha-D-glucose 1-phosphate (G1P) to produce pyrophosphate and ADP-Glc. The chain is Glucose-1-phosphate adenylyltransferase from Lachnospira eligens (strain ATCC 27750 / DSM 3376 / VPI C15-48 / C15-B4) (Eubacterium eligens).